The chain runs to 314 residues: tRNA pseudouridine synthase B (314 aa).

His43 is a binding site for substrate. The active-site Nucleophile is Asp48. Tyr76, Tyr179, and Leu200 together coordinate substrate.

The protein belongs to the pseudouridine synthase TruB family. Type 1 subfamily.

The enzyme catalyses uridine(55) in tRNA = pseudouridine(55) in tRNA. Its function is as follows. Responsible for synthesis of pseudouridine from uracil-55 in the psi GC loop of transfer RNAs. The polypeptide is tRNA pseudouridine synthase B (Salmonella choleraesuis (strain SC-B67)).